Reading from the N-terminus, the 331-residue chain is 4-hydroxythreonine-4-phosphate dehydrogenase (331 aa).

Residues H137 and T138 each contribute to the substrate site. 3 residues coordinate a divalent metal cation: H167, H212, and H267. Substrate-binding residues include K275, N284, and R293.

It belongs to the PdxA family. Homodimer. Requires Zn(2+) as cofactor. It depends on Mg(2+) as a cofactor. Co(2+) serves as cofactor.

It is found in the cytoplasm. It carries out the reaction 4-(phosphooxy)-L-threonine + NAD(+) = 3-amino-2-oxopropyl phosphate + CO2 + NADH. The protein operates within cofactor biosynthesis; pyridoxine 5'-phosphate biosynthesis; pyridoxine 5'-phosphate from D-erythrose 4-phosphate: step 4/5. Functionally, catalyzes the NAD(P)-dependent oxidation of 4-(phosphooxy)-L-threonine (HTP) into 2-amino-3-oxo-4-(phosphooxy)butyric acid which spontaneously decarboxylates to form 3-amino-2-oxopropyl phosphate (AHAP). In Yersinia pseudotuberculosis serotype I (strain IP32953), this protein is 4-hydroxythreonine-4-phosphate dehydrogenase.